The primary structure comprises 513 residues: ATP synthase subunit alpha (513 aa).

169–176 is a binding site for ATP; the sequence is GDRQTGKT.

It belongs to the ATPase alpha/beta chains family. As to quaternary structure, F-type ATPases have 2 components, CF(1) - the catalytic core - and CF(0) - the membrane proton channel. CF(1) has five subunits: alpha(3), beta(3), gamma(1), delta(1), epsilon(1). CF(0) has three main subunits: a(1), b(2) and c(9-12). The alpha and beta chains form an alternating ring which encloses part of the gamma chain. CF(1) is attached to CF(0) by a central stalk formed by the gamma and epsilon chains, while a peripheral stalk is formed by the delta and b chains.

The protein localises to the cell inner membrane. It carries out the reaction ATP + H2O + 4 H(+)(in) = ADP + phosphate + 5 H(+)(out). Functionally, produces ATP from ADP in the presence of a proton gradient across the membrane. The alpha chain is a regulatory subunit. This chain is ATP synthase subunit alpha, found in Ruthia magnifica subsp. Calyptogena magnifica.